Here is a 336-residue protein sequence, read N- to C-terminus: Tryptophan--tRNA ligase 1 (336 aa).

Residues 9-11 (KPT) and 17-18 (GN) contribute to the ATP site. The short motif at 10–18 (PTGHLTLGN) is the 'HIGH' region element. D137 is an L-tryptophan binding site. ATP-binding positions include 149–151 (GED), V188, and 197–201 (KMGKS). The 'KMSKS' region signature appears at 197–201 (KMGKS).

The protein belongs to the class-I aminoacyl-tRNA synthetase family. As to quaternary structure, homodimer.

The protein resides in the cytoplasm. The catalysed reaction is tRNA(Trp) + L-tryptophan + ATP = L-tryptophyl-tRNA(Trp) + AMP + diphosphate + H(+). Its function is as follows. Catalyzes the attachment of tryptophan to tRNA(Trp). This is Tryptophan--tRNA ligase 1 from Streptomyces coelicolor (strain ATCC BAA-471 / A3(2) / M145).